A 466-amino-acid chain; its full sequence is 55 kDa erythrocyte membrane protein (466 aa).

Position 2 is an N-acetylthreonine (Thr2). Residue Ser19 is modified to Phosphoserine. At Thr49 the chain carries Phosphothreonine. Ser57 and Ser110 each carry phosphoserine. The region spanning 71–152 (LIQFEKVTEE…MISLKVIPNQ (82 aa)) is the PDZ domain. Residues 158–228 (ALQMFMRAQF…PSPELQEWRV (71 aa)) enclose the SH3 domain. Ser243 is subject to Phosphoserine. An interaction with PALS1 region spans residues 268–466 (VVSYEEVVRL…PQWVPVSWVY (199 aa)). The 170-residue stretch at 282–451 (RKTLVLIGAS…TLKTLQETFD (170 aa)) folds into the Guanylate kinase-like domain.

It belongs to the MAGUK family. Heterodimer with PALS1. Interacts with DLG5 and NF2. Interacts (via guanylate kinase-like domain) with WHRN (via third PDZ domain). Interacts with PALS1. Post-translationally, palmitoylated.

Its subcellular location is the cell membrane. The protein resides in the cell projection. It is found in the stereocilium. Essential regulator of neutrophil polarity. Regulates neutrophil polarization by regulating AKT1 phosphorylation through a mechanism that is independent of PIK3CG activity. This chain is 55 kDa erythrocyte membrane protein (MPP1), found in Bos taurus (Bovine).